We begin with the raw amino-acid sequence, 136 residues long: Large ribosomal subunit protein uL16c (136 aa).

This sequence belongs to the universal ribosomal protein uL16 family. In terms of assembly, part of the 50S ribosomal subunit.

It localises to the plastid. Its subcellular location is the chloroplast. The sequence is that of Large ribosomal subunit protein uL16c from Illicium oligandrum (Star anise).